The sequence spans 177 residues: Large ribosomal subunit protein uL6 (177 aa).

It belongs to the universal ribosomal protein uL6 family. As to quaternary structure, part of the 50S ribosomal subunit.

This protein binds to the 23S rRNA, and is important in its secondary structure. It is located near the subunit interface in the base of the L7/L12 stalk, and near the tRNA binding site of the peptidyltransferase center. The protein is Large ribosomal subunit protein uL6 of Magnetococcus marinus (strain ATCC BAA-1437 / JCM 17883 / MC-1).